The primary structure comprises 750 residues: (13E)-labda-7,13-dien-15-ol synthase (750 aa).

Residues Asp-284, Asp-286, Asp-501, Asp-505, Asn-647, Thr-651, and Glu-655 each coordinate Mg(2+). Positions 284–287 (DIDD) match the DXDD motif motif. Residues 501–505 (DDLAD) carry the DDXXD motif motif.

Belongs to the terpene synthase family. The cofactor is Mg(2+).

The enzyme catalyses geranylgeranyl diphosphate + H2O = (13E)-labda-7,13-dien-15-ol + diphosphate. It functions in the pathway secondary metabolite biosynthesis; terpenoid biosynthesis. In terms of biological role, bifunctional diterpene synthase that directly generates the endocyclic double bond, as well as the hydroxyl group: produces an endocyclic double bond isomer of copalyl diphosphate (CPP), and carries out subsequent replacement of the diphosphate by a hydroxyl group to form (13E)-labda-7,13-dien-15-ol. The protein is (13E)-labda-7,13-dien-15-ol synthase of Selaginella moellendorffii (Spikemoss).